Reading from the N-terminus, the 89-residue chain is Small ribosomal subunit protein uS15 (89 aa).

The protein belongs to the universal ribosomal protein uS15 family. Part of the 30S ribosomal subunit. Forms a bridge to the 50S subunit in the 70S ribosome, contacting the 23S rRNA.

In terms of biological role, one of the primary rRNA binding proteins, it binds directly to 16S rRNA where it helps nucleate assembly of the platform of the 30S subunit by binding and bridging several RNA helices of the 16S rRNA. Its function is as follows. Forms an intersubunit bridge (bridge B4) with the 23S rRNA of the 50S subunit in the ribosome. The chain is Small ribosomal subunit protein uS15 from Phocaeicola vulgatus (strain ATCC 8482 / DSM 1447 / JCM 5826 / CCUG 4940 / NBRC 14291 / NCTC 11154) (Bacteroides vulgatus).